The chain runs to 417 residues: Zinc finger CCCH domain-containing protein ZFN-like (417 aa).

2 consecutive C3H1-type zinc fingers follow at residues 31 to 58 (PGEPDCSYYIRTGLCRFGATCRFNHPPN) and 75 to 103 (RLGQPECQYYLKTGTCKFGATCRFHHPKD). The C3H1-type 3; degenerate zinc finger occupies 121-149 (RPNESERAYYLRTGQCKFGNTCKFHHPQP). C3H1-type zinc fingers lie at residues 278–306 (RPDQPECQFYMKTGDCKFGAVCRFHHPRE) and 324–352 (RPGEPLCVFYSRYGICKFGPSCKFDHPMG). Residues 383 to 417 (SSEGLVESGTAKPRRLSLSETRPIPPGDDNIDDEG) form a disordered region.

It is found in the nucleus. The protein is Zinc finger CCCH domain-containing protein ZFN-like of Pisum sativum (Garden pea).